Here is a 1094-residue protein sequence, read N- to C-terminus: Probable arabinosyltransferase C (1094 aa).

13 helical membrane-spanning segments follow: residues 28–50 (IARY…TPLL), 232–251 (AAMI…LHIL), 264–286 (PARW…WWHF), 341–360 (SIWM…WVIS), 373–392 (TSRA…WLPL), 431–453 (IGAL…LVAI), 466–488 (RFGV…IPIF), 530–552 (SIAR…AMSL), 565–582 (SRRI…MMFT), 586–608 (WTHH…AVAV), 620–642 (TVFA…GWWY), 657–679 (WRWS…AAWF), and 700–722 (LAGI…EVVS). Positions 817-831 (GSEPGTEGGTTAAPG) are enriched in low complexity. Positions 817–836 (GSEPGTEGGTTAAPGINGSR) are disordered.

The protein belongs to the emb family.

It localises to the cell membrane. Functionally, arabinosyl transferase responsible for the polymerization of arabinose into the arabinan of arabinogalactan. The polypeptide is Probable arabinosyltransferase C (embC) (Mycobacterium tuberculosis (strain CDC 1551 / Oshkosh)).